The following is a 505-amino-acid chain: Ikaros family zinc finger protein (505 aa).

4 consecutive C2H2-type zinc fingers follow at residues 18–40 (LTCE…KRSH), 46–68 (FQCN…VKLH), 74–96 (FKCS…IRTH), and 102–128 (YKCN…PGFH). 2 stretches are compositionally biased toward polar residues: residues 262 to 273 (FLNTPSPVTRSA) and 309 to 327 (RFQH…SQQP). 2 disordered regions span residues 262-296 (FLNT…DIGS) and 309-440 (RFQH…VSGS). A compositionally biased stretch (gly residues) spans 336–345 (ILGGSLGGIC). Residues 366–377 (ATSSPSNSCPDS) show a composition bias toward polar residues. Over residues 393–406 (GSGSSTSRPNGSTG) the composition is skewed to low complexity. Positions 409-419 (HRPEMHQDNGR) are enriched in basic and acidic residues. Positions 424–439 (SGASDSSSLPTYNVSG) are enriched in polar residues. 2 C2H2-type zinc fingers span residues 448 to 470 (YPCH…MGCH) and 476 to 500 (FECN…RGEH).

It belongs to the Ikaros C2H2-type zinc-finger protein family. Heterodimer and homodimer with other IKAROS family members. As to expression, expression is strongest in the blood, gills and intestine.

It localises to the nucleus. This Myxine glutinosa (Atlantic hagfish) protein is Ikaros family zinc finger protein.